Consider the following 174-residue polypeptide: MAVTAFNTLKLVSSSLDPIPSVSCSSYSFSLIYVGSPYKRCLKQSCSVRAMTSSSSAASSSSSSFGSRMEESIRKTVTENTVVIYSKTWCSYCTEVKTLFKRLGVQPLVVELDQLGPQGPQLQKVLERLTGQHTVPNVFVCGKHIGGCTDTVKLNRKGDLELMLAEANGKNGQS.

The N-terminal 51 residues, 1–51, are a transit peptide targeting the chloroplast; sequence MAVTAFNTLKLVSSSLDPIPSVSCSSYSFSLIYVGSPYKRCLKQSCSVRAM. An N-acetylthreonine modification is found at Thr52. An S-glutathionyl cysteine; partial modification is found at Cys90. Cysteines 90 and 93 form a disulfide. The region spanning 93-171 is the Glutaredoxin domain; it reads CTEVKTLFKR…LMLAEANGKN (79 aa). Glutathione contacts are provided by Val135, Cys148, and Thr149. The residue at position 148 (Cys148) is an S-glutathionyl cysteine; partial.

This sequence belongs to the glutaredoxin family. CPYC subfamily. In terms of assembly, monomeric apoprotein and homodimeric holoprotein containing a [2Fe-2S] cluster. No in vitro interactions with SUFE1, BOLA1, BOLA2 or BOLA4. Post-translationally, glutathionylated.

It localises to the plastid. The protein localises to the chloroplast. Its function is as follows. Has a glutathione-disulfide oxidoreductase activity in the presence of NADPH and glutathione reductase. Reduces low molecular weight disulfides and proteins. Can assemble a [2Fe-2S] cluster, but cannot transfer it to an apoferredoxin. The sequence is that of Glutaredoxin-C5, chloroplastic from Arabidopsis thaliana (Mouse-ear cress).